We begin with the raw amino-acid sequence, 358 residues long: 3-dehydroquinate synthase (358 aa).

NAD(+)-binding positions include 69–74 (DGEQYK), 103–107 (GVIGD), 127–128 (TT), Lys140, Lys149, and 167–170 (TLNT). Residues Glu182, His245, and His262 each coordinate Zn(2+).

Belongs to the sugar phosphate cyclases superfamily. Dehydroquinate synthase family. The cofactor is Co(2+). Requires Zn(2+) as cofactor. It depends on NAD(+) as a cofactor.

It is found in the cytoplasm. The catalysed reaction is 7-phospho-2-dehydro-3-deoxy-D-arabino-heptonate = 3-dehydroquinate + phosphate. It participates in metabolic intermediate biosynthesis; chorismate biosynthesis; chorismate from D-erythrose 4-phosphate and phosphoenolpyruvate: step 2/7. Catalyzes the conversion of 3-deoxy-D-arabino-heptulosonate 7-phosphate (DAHP) to dehydroquinate (DHQ). The chain is 3-dehydroquinate synthase from Hydrogenovibrio crunogenus (strain DSM 25203 / XCL-2) (Thiomicrospira crunogena).